The primary structure comprises 435 residues: Citrate synthase (435 aa).

Active-site residues include H311 and D370.

It belongs to the citrate synthase family. Homohexamer.

The enzyme catalyses oxaloacetate + acetyl-CoA + H2O = citrate + CoA + H(+). Its pathway is carbohydrate metabolism; tricarboxylic acid cycle; isocitrate from oxaloacetate: step 1/2. The chain is Citrate synthase (gltA) from Rickettsia africae (strain ESF-5).